We begin with the raw amino-acid sequence, 262 residues long: Carbonic anhydrase 1 (262 aa).

Position 2 is an N-acetylalanine (Ala2). Positions 4 to 261 (LNWSYEGENG…LKGRQVKASF (258 aa)) constitute an Alpha-carbonic anhydrase domain. The Proton donor/acceptor role is filled by His65. His95, His97, and His120 together coordinate Zn(2+). Substrate is bound by residues Thr200 and 200–201 (TH).

The protein belongs to the alpha-carbonic anhydrase family. It depends on Zn(2+) as a cofactor.

It localises to the cytoplasm. It catalyses the reaction hydrogencarbonate + H(+) = CO2 + H2O. It carries out the reaction urea = cyanamide + H2O. Inhibited by acetazolamide. Its function is as follows. Catalyzes the reversible hydration of carbon dioxide. Can hydrate cyanamide to urea. This chain is Carbonic anhydrase 1 (CA1), found in Monodelphis domestica (Gray short-tailed opossum).